The following is a 229-amino-acid chain: Urease accessory protein UreF (229 aa).

Belongs to the UreF family. In terms of assembly, ureD, UreF and UreG form a complex that acts as a GTP-hydrolysis-dependent molecular chaperone, activating the urease apoprotein by helping to assemble the nickel containing metallocenter of UreC. The UreE protein probably delivers the nickel.

It is found in the cytoplasm. Required for maturation of urease via the functional incorporation of the urease nickel metallocenter. This Staphylococcus aureus (strain bovine RF122 / ET3-1) protein is Urease accessory protein UreF.